We begin with the raw amino-acid sequence, 751 residues long: Photosystem I P700 chlorophyll a apoprotein A1 (751 aa).

A run of 8 helical transmembrane segments spans residues 73–96 (IFSA…FHGA), 159–182 (LYST…FHYH), 198–222 (MNHH…HVSL), 294–312 (TAHH…GHMY), 349–372 (WHAQ…HHMY), 388–414 (LSLF…IFMV), 436–458 (AIIS…LYIH), and 533–551 (FLVH…LILL). 2 residues coordinate [4Fe-4S] cluster: cysteine 575 and cysteine 584. Transmembrane regions (helical) follow at residues 591–612 (HVFL…HFSW) and 665–687 (LSAY…MFLF). Position 676 (histidine 676) interacts with chlorophyll a'. 2 residues coordinate chlorophyll a: methionine 684 and tyrosine 692. Position 693 (tryptophan 693) interacts with phylloquinone. A helical transmembrane segment spans residues 725–745 (AVGVAHYLLGGIATTWAFFLA).

The protein belongs to the PsaA/PsaB family. In terms of assembly, the PsaA/B heterodimer binds the P700 chlorophyll special pair and subsequent electron acceptors. PSI consists of a core antenna complex that captures photons, and an electron transfer chain that converts photonic excitation into a charge separation. The eukaryotic PSI reaction center is composed of at least 11 subunits. It depends on P700 is a chlorophyll a/chlorophyll a' dimer, A0 is one or more chlorophyll a, A1 is one or both phylloquinones and FX is a shared 4Fe-4S iron-sulfur center. as a cofactor.

It is found in the plastid. It localises to the chloroplast thylakoid membrane. It carries out the reaction reduced [plastocyanin] + hnu + oxidized [2Fe-2S]-[ferredoxin] = oxidized [plastocyanin] + reduced [2Fe-2S]-[ferredoxin]. Functionally, psaA and PsaB bind P700, the primary electron donor of photosystem I (PSI), as well as the electron acceptors A0, A1 and FX. PSI is a plastocyanin/cytochrome c6-ferredoxin oxidoreductase, converting photonic excitation into a charge separation, which transfers an electron from the donor P700 chlorophyll pair to the spectroscopically characterized acceptors A0, A1, FX, FA and FB in turn. Oxidized P700 is reduced on the lumenal side of the thylakoid membrane by plastocyanin or cytochrome c6. The sequence is that of Photosystem I P700 chlorophyll a apoprotein A1 from Nephroselmis olivacea (Green alga).